A 445-amino-acid chain; its full sequence is UDP-N-acetylmuramoylalanine--D-glutamate ligase (445 aa).

117–123 (GSNGKTT) is an ATP binding site.

The protein belongs to the MurCDEF family.

The protein resides in the cytoplasm. It catalyses the reaction UDP-N-acetyl-alpha-D-muramoyl-L-alanine + D-glutamate + ATP = UDP-N-acetyl-alpha-D-muramoyl-L-alanyl-D-glutamate + ADP + phosphate + H(+). Its pathway is cell wall biogenesis; peptidoglycan biosynthesis. In terms of biological role, cell wall formation. Catalyzes the addition of glutamate to the nucleotide precursor UDP-N-acetylmuramoyl-L-alanine (UMA). This is UDP-N-acetylmuramoylalanine--D-glutamate ligase from Neisseria gonorrhoeae (strain NCCP11945).